The sequence spans 703 residues: Protein teflon (703 aa).

The C2H2-type 1 zinc-finger motif lies at 32–55 (MLCHFCKDIFTHLPEFMRHLQWSH). Disordered regions lie at residues 78 to 111 (SSEDDVQSQANSCSSGDSGLAGEMEDADGEPGSS), 140 to 161 (EQSYSKNPPDSRTEGFRCARKP), 205 to 239 (NDVSKPRLNKLRSKLNNSLSSNISGPPKQSKMPSL), and 339 to 434 (SQQP…SKLE). A compositionally biased stretch (polar residues) spans 84 to 94 (QSQANSCSSGD). Residues 148–161 (PDSRTEGFRCARKP) show a composition bias toward basic and acidic residues. Composition is skewed to polar residues over residues 339–352 (SQQPSELNTTNNAV) and 364–373 (SLTVISSSPI). C2H2-type zinc fingers lie at residues 649-672 (YFCECCEEIFPNEARYKKHVQSVH) and 677-700 (FTCSECGKSFKRLYFYDKHLKTVH).

The protein belongs to the Teflon family.

The protein resides in the nucleus. The protein localises to the chromosome. Specifically required in males for proper segregation of autosomal bivalents at meiosis I. Expression is required in the male germ line prior to spermatocyte stage S4. May have a role as a bridging molecule maintaining adhesion to hold autosome bivalents together via heterochromatic connections. This is Protein teflon from Drosophila persimilis (Fruit fly).